The following is a 160-amino-acid chain: Peripheral myelin protein 22 (160 aa).

Methionine 1 is a topological domain (cytoplasmic). A helical membrane pass occupies residues 2-31 (LLLLLSIIVLHVAVLVLLFVSTIVSQWIVG). The Extracellular portion of the chain corresponds to 32–64 (NGHATDLWQNCSTSSSGNVHHCFSSSPNEWLQS). A glycan (N-linked (GlcNAc...) asparagine) is linked at asparagine 41. A helical membrane pass occupies residues 65–91 (VQATMILSIIFSILSLFLFFCQLFTLT). At 92–95 (KGGR) the chain is on the cytoplasmic side. A helical transmembrane segment spans residues 96–119 (FYITGIFQILAGLCVMSAAAIYTV). Residues 120 to 133 (RHPEWHLNSDYSYG) are Extracellular-facing. A helical transmembrane segment spans residues 134-156 (FAYILAWVAFPLALLSGVIYVIL). Residues 157-160 (RKRE) are Cytoplasmic-facing.

This sequence belongs to the PMP-22/EMP/MP20 family. In terms of processing, ubiquitinated by the DCX(DCAF13) E3 ubiquitin ligase complex, leading to its degradation.

It is found in the cell membrane. In terms of biological role, might be involved in growth regulation, and in myelinization in the peripheral nervous system. The sequence is that of Peripheral myelin protein 22 (PMP22) from Homo sapiens (Human).